The following is a 144-amino-acid chain: Large ribosomal subunit protein uL13 (144 aa).

This sequence belongs to the universal ribosomal protein uL13 family. As to quaternary structure, part of the 50S ribosomal subunit.

Functionally, this protein is one of the early assembly proteins of the 50S ribosomal subunit, although it is not seen to bind rRNA by itself. It is important during the early stages of 50S assembly. This is Large ribosomal subunit protein uL13 from Syntrophomonas wolfei subsp. wolfei (strain DSM 2245B / Goettingen).